The chain runs to 1096 residues: MGEVKSVKVDNWGVFFLQKLQNFFNKTDYCDLTLQFRDNSQLKVHRLVLSACTDYFNVLEQTCEIVDDALIMPNEFQADVVVPIVNFMYTGTLEFELKMYGKLLRTAKEMNMTVLLKLLEAHRRTMENVNRQQRPPSPKGIRRRTVGQPSSGLPQQRVLGPSPQSRNVATPIAQRANTQRGSTGNTMSRTSGGSNRSPYGDSSNVKQEPTSPFEQLRKGYNNNKRPAQTSLLSPPSKKPSLEEVKEFAEQQRMRKQIAAEYGDNDPEYDGGMLYDDVHAGDDDDDDMPPQPSTSKQQSPQGTQTQLEHGSTTIILKQDSPSQTPTIIVKDSSNAKLNHTKIIAEVLRQYPHIVKGHKNIKLKIMPNTPAAPTEKSAPATVKPPANQSSATTSPHKKLHVSFKADKSTPLITAQQKAASSQQKSGTSQTTGNQGTGANPPANTAAAQKRRIDSKTMHALIAQGAENTTGPWLCLRCGVNGRPISIPSYRGFRRHLINTHKETIDPALCEHCGWRSVNNRELHFHMYMEHQTKSLLYTFAECALCNQSYRTKGELEAHINEVHTDDNKQQCIYCNKVFEQELQLYRHMKSYHKEQALEDGIIDETDEEFLGSQDEEEEAEGDEEQEPEQTGKVRILSDISLPATSAITVQQAQQEQLQEEDVEQVQQEVKFVGADGNEVELTDEQRKEILSQLNQQQAGATAGGVVMVLSEPEAEHVKQETDEKSLAGTEEEYDDSQIYSELGAADSVESAKKNIADESKESIDNLEWAENLIAESEEQSNKEPKSDKPRDDISEKLKELTGDWTEDENDDDVDDKPATAELASELANKDPEPTVHEEEDDIDLALQSLHKGPEEATEEKASEESVTSADDAVDAVPNINSQPEKMDVDSEAADEKASKAEVQIKKEAELENDQEEFIKEDSPIPHSDSVAELREAVTASEGEDDVHLEADNIRKELLDELIAEAEKPDQEKDIVQSEENATTEALDRSVTDEDDLVPPTQVSTEQMEIDEPAAEKAAENNEDTRTADEKEAVEDKPNQTQDVTTAEKPTLESAKAGDEATSGEAASVDKVKSLISEWGDDDEDEDENGVSAAAKEEL.

The involved in microtubule and centrosome binding stretch occupies residues 1-209; sequence MGEVKSVKVD…GDSSNVKQEP (209 aa). Positions 30–97 constitute a BTB domain; sequence CDLTLQFRDN…MYTGTLEFEL (68 aa). Residues 126 to 308 are disordered; sequence MENVNRQQRP…PQGTQTQLEH (183 aa). Polar residues-rich tracts occupy residues 175-213 and 220-230; these read RANT…TSPF and YNNNKRPAQTS. 2 positions are modified to phosphoserine: S197 and S211. Residues 207–271 are nuclear localization; sequence QEPTSPFEQL…GDNDPEYDGG (65 aa). Residues 210–245 are involved in interaction with cliff; the sequence is TSPFEQLRKGYNNNKRPAQTSLLSPPSKKPSLEEVK. Residue T229 is modified to Phosphothreonine. S233 is subject to Phosphoserine. Residues 239–252 are compositionally biased toward basic and acidic residues; it reads PSLEEVKEFAEQQR. The segment at 245 to 468 is centrosomal targeting M domain involved in interaction with ZIPIC; that stretch reads KEFAEQQRMR…IAQGAENTTG (224 aa). The segment covering 292-305 has biased composition (low complexity); that stretch reads STSKQQSPQGTQTQ. S298 and S319 each carry phosphoserine. The involved in interaction with cliff stretch occupies residues 309–390; sequence GSTTIILKQD…KPPANQSSAT (82 aa). Residues 366 to 449 are disordered; it reads NTPAAPTEKS…ANTAAAQKRR (84 aa). Positions 385–508 are centrosomal localization and interaction with microtubules; sequence NQSSATTSPH…KETIDPALCE (124 aa). Positions 412–445 are enriched in low complexity; sequence AQQKAASSQQKSGTSQTTGNQGTGANPPANTAAA. C2H2-type zinc fingers lie at residues 538-561 and 567-590; these read AECA…NEVH and QQCI…KSYH. Position 603 is a phosphothreonine (T603). Residues 608–625 show a composition bias toward acidic residues; sequence LGSQDEEEEAEGDEEQEP. The tract at residues 608 to 630 is disordered; sequence LGSQDEEEEAEGDEEQEPEQTGK. Phosphoserine is present on residues S610, S708, and S723. Residues 710–733 form a disordered region; it reads PEAEHVKQETDEKSLAGTEEEYDD. The segment covering 711 to 723 has biased composition (basic and acidic residues); sequence EAEHVKQETDEKS. T727 carries the phosphothreonine modification. A phosphoserine mark is found at S745, S748, S757, and S760. The disordered stretch occupies residues 770–927; that stretch reads LIAESEEQSN…EDSPIPHSDS (158 aa). Basic and acidic residues predominate over residues 777–799; sequence QSNKEPKSDKPRDDISEKLKELT. A compositionally biased stretch (acidic residues) spans 802–812; it reads WTEDENDDDVD. The residue at position 817 (T817) is a Phosphothreonine. Basic and acidic residues-rich tracts occupy residues 825–834, 849–861, 882–907, and 914–927; these read ANKDPEPTVH, KGPE…KASE, EKMD…KEAE, and EFIK…HSDS. Residues S920, S925, and S927 each carry the phosphoserine modification. T936 is modified (phosphothreonine). At S938 the chain carries Phosphoserine. 2 stretches are compositionally biased toward basic and acidic residues: residues 960 to 973 and 1011 to 1035; these read IAEA…KDIV and AAEK…EDKP. The tract at residues 960–1096 is disordered; sequence IAEAEKPDQE…GVSAAAKEEL (137 aa). Phosphoserine occurs at positions 1071 and 1074. Acidic residues predominate over residues 1076 to 1086; sequence WGDDDEDEDEN.

As to quaternary structure, homodimerizes via the N-terminal BTB domain. Component of the gypsy chromatin insulator complex, composed of Cp190, mod(mdg4) and su(Hw). The gypsy chromatin insulator complex interacts with Topors via mod(mdg4) and su(Hw). Interacts with Cp60. Interacts with inv. Interacts with Nup98. Interacts (via BTB domain) with pita (via region between the ZAD domain and the first zinc finger domain); the interaction is direct. Interacts with ZIPIC (via region between the ZAD domain and the first zinc finger domain); the interaction is direct. Interacts (via regions between the BTB domain and first zinc finger domain) with cliff (via regions flanking MADF domain 1); the interaction is probably direct. Associates (via N-terminus) with microtubules; the interaction is direct, is enhanced by dimerization and involves multiple regions within the N-terminus. Microtubule association is enriched at growing plus ends. In terms of tissue distribution, expressed in spermatids but not in mature spermatozoa. Localizes within the spermatids to a sheath of microtubules around the nucleus and to microtubules within the tail.

It localises to the nucleus. The protein resides in the cytoplasm. Its subcellular location is the cytoskeleton. It is found in the microtubule organizing center. The protein localises to the centrosome. It localises to the chromosome. The protein resides in the nucleoplasm. Functionally, plays a central role in chromatin domain organization and boundary function through recruitment by a range of insulator DNA-binding proteins, including ZIPIC, pita, CTCF, su(Hw), cliff and others. Together with pita and CTCF cooperatively binds to and regulates the activity of the Miscadastral pigmentation (MCP) insulator. Cooperatively recruited to the front-ultraabdominal (Fub) boundary by pita, su(Hw) and cliff. Recruitment of Cp190 together with Chro/chromator induces chromatin decondensation. Component of the gypsy chromatin insulator complex which is required for the function of the gypsy chromatin insulator and other endogenous chromatin insulators. Chromatin insulators are regulatory elements that establish independent domains of transcriptional activity within eukaryotic genomes. Insulators have two defining properties; they can block the communication between an enhancer and a promoter when placed between them and can also buffer transgenes from position effect variegation (PEV). Insulators are proposed to structure the chromatin fiber into independent domains of differing transcriptional potential by promoting the formation of distinct chromatin loops to form topologically associating domains (TADs). This chromatin looping may involve the formation of insulator bodies, where homotypic interactions between individual subunits of the insulator complex could promote the clustering of widely spaced insulators at the nuclear periphery. Within the gypsy insulator complex, this protein may directly bind to insulator DNA at sites distinct from those recognized by su(Hw). Required during embryogenesis for axial expansion, an actin/myosin dependent process that distributes the dividing nuclei along the anterior-posterior axis of the syncytial embryo. Associates with centrosomes and interphase microtubules during mitosis, and recruits CP60; may have a role in maintaining centrosome and spindle integrity. The protein is Centrosome-associated zinc finger protein Cp190 of Drosophila melanogaster (Fruit fly).